Consider the following 513-residue polypeptide: Probable cytosol aminopeptidase (513 aa).

Residues K277 and D282 each contribute to the Mn(2+) site. K289 is a catalytic residue. Mn(2+) is bound by residues D300, D359, and E361. The active site involves R363.

This sequence belongs to the peptidase M17 family. Mn(2+) serves as cofactor.

It is found in the cytoplasm. The catalysed reaction is Release of an N-terminal amino acid, Xaa-|-Yaa-, in which Xaa is preferably Leu, but may be other amino acids including Pro although not Arg or Lys, and Yaa may be Pro. Amino acid amides and methyl esters are also readily hydrolyzed, but rates on arylamides are exceedingly low.. It catalyses the reaction Release of an N-terminal amino acid, preferentially leucine, but not glutamic or aspartic acids.. Presumably involved in the processing and regular turnover of intracellular proteins. Catalyzes the removal of unsubstituted N-terminal amino acids from various peptides. The protein is Probable cytosol aminopeptidase of Mycobacterium sp. (strain JLS).